We begin with the raw amino-acid sequence, 104 residues long: Large ribosomal subunit protein bL21 (104 aa).

Belongs to the bacterial ribosomal protein bL21 family. As to quaternary structure, part of the 50S ribosomal subunit. Contacts protein L20.

In terms of biological role, this protein binds to 23S rRNA in the presence of protein L20. This chain is Large ribosomal subunit protein bL21, found in Helicobacter pylori (strain Shi470).